The chain runs to 230 residues: CASP-like protein 2A2 (230 aa).

A disordered region spans residues 1–23; the sequence is MEKKDEGNPPMAVMGSRDENEDV. The Cytoplasmic segment spans residues 1–29; sequence MEKKDEGNPPMAVMGSRDENEDVKSTMRT. A helical transmembrane segment spans residues 30 to 50; sequence AETMLRLVPVALCVSALVVML. The Extracellular segment spans residues 51-71; the sequence is KNTQTNDYGSLSYSDLGAFRY. The helical transmembrane segment at 72–92 threads the bilayer; the sequence is LVNANGICAGYSLLSAVIVAM. The Cytoplasmic segment spans residues 93-100; that stretch reads PRAWTMPQ. A helical membrane pass occupies residues 101 to 121; it reads AWTFFLLDQVLTYVILAAGTV. Topologically, residues 122-151 are extracellular; the sequence is STEVLYLANKGDTSIAWSAACASFGGFCHK. Residues 152-172 traverse the membrane as a helical segment; sequence ALISTVITFVAVIFYAALSLV. Residues 173–230 are Cytoplasmic-facing; that stretch reads SSYKLFSKYDAPVVTQSGEGIKTVTLGSPPPPPPPPPSNLHLHLHAKLACPAHNNSPN.

The protein belongs to the Casparian strip membrane proteins (CASP) family. In terms of assembly, homodimer and heterodimers.

It is found in the cell membrane. The polypeptide is CASP-like protein 2A2 (Populus trichocarpa (Western balsam poplar)).